A 281-amino-acid polypeptide reads, in one-letter code: Cytochrome bc1 complex cytochrome c subunit (281 aa).

Residues 17–37 (AAGAMALAVGLTGAGILVNAV) form a helical membrane-spanning segment. Cytochrome c domains follow at residues 52 to 132 (ALIQ…EANG) and 162 to 240 (ADVA…KSAK). Residues Cys-65, Cys-68, His-69, Cys-175, Cys-178, and His-179 each coordinate heme c. Residues 259–279 (GMMMWLVGIVVLVAAAMWIGS) form a helical membrane-spanning segment.

In terms of assembly, the cytochrome bc1 complex is composed of a cytochrome b (QcrB), the Rieske iron-sulfur protein (QcrA) and a diheme cytochrome c (QcrC) subunit. The bc1 complex forms a supercomplex with cytochrome c oxidase (cytochrome aa3). In terms of processing, binds 2 heme c groups covalently per subunit.

Its subcellular location is the cell membrane. The catalysed reaction is a quinol + 2 Fe(III)-[cytochrome c](out) = a quinone + 2 Fe(II)-[cytochrome c](out) + 2 H(+)(out). Cytochrome c1 subunit of the cytochrome bc1 complex, an essential component of the respiratory electron transport chain required for ATP synthesis. The bc1 complex catalyzes the oxidation of menaquinol and the reduction of cytochrome c in the respiratory chain. The bc1 complex operates through a Q-cycle mechanism that couples electron transfer to generation of the proton gradient that drives ATP synthesis. The protein is Cytochrome bc1 complex cytochrome c subunit (qcrC) of Corynebacterium diphtheriae (strain ATCC 700971 / NCTC 13129 / Biotype gravis).